A 529-amino-acid polypeptide reads, in one-letter code: Endoglucanase 21 (529 aa).

The N-terminal stretch at 1–24 (MVAAMTMCAAVAVLLVLTSTMAAA) is a signal peptide. Asp-89 functions as the Nucleophile in the catalytic mechanism. N-linked (GlcNAc...) asparagine glycosylation is present at Asn-342. Residues His-429, Asp-481, and Glu-490 contribute to the active site.

Belongs to the glycosyl hydrolase 9 (cellulase E) family. Expressed in roots and flowers.

It is found in the secreted. It carries out the reaction Endohydrolysis of (1-&gt;4)-beta-D-glucosidic linkages in cellulose, lichenin and cereal beta-D-glucans.. In Oryza sativa subsp. japonica (Rice), this protein is Endoglucanase 21 (GLU9).